A 481-amino-acid chain; its full sequence is 3-isopropylmalate dehydratase large subunit (481 aa).

Cys-357, Cys-417, and Cys-420 together coordinate [4Fe-4S] cluster.

This sequence belongs to the aconitase/IPM isomerase family. LeuC type 1 subfamily. In terms of assembly, heterodimer of LeuC and LeuD. The cofactor is [4Fe-4S] cluster.

The catalysed reaction is (2R,3S)-3-isopropylmalate = (2S)-2-isopropylmalate. It participates in amino-acid biosynthesis; L-leucine biosynthesis; L-leucine from 3-methyl-2-oxobutanoate: step 2/4. Catalyzes the isomerization between 2-isopropylmalate and 3-isopropylmalate, via the formation of 2-isopropylmaleate. The polypeptide is 3-isopropylmalate dehydratase large subunit (Maricaulis maris (strain MCS10) (Caulobacter maris)).